A 1158-amino-acid chain; its full sequence is ATP-dependent helicase/deoxyribonuclease subunit B (1158 aa).

Belongs to the helicase family. AddB/RexB type 2 subfamily. Heterodimer of AddA and RexB. Mg(2+) serves as cofactor.

Functionally, the heterodimer acts as both an ATP-dependent DNA helicase and an ATP-dependent, dual-direction single-stranded exonuclease. Recognizes the chi site generating a DNA molecule suitable for the initiation of homologous recombination. This subunit has 5' -&gt; 3' nuclease activity but not helicase activity. The protein is ATP-dependent helicase/deoxyribonuclease subunit B of Lactobacillus johnsonii (strain CNCM I-12250 / La1 / NCC 533).